Here is a 424-residue protein sequence, read N- to C-terminus: Histidine--tRNA ligase (424 aa).

The protein belongs to the class-II aminoacyl-tRNA synthetase family. In terms of assembly, homodimer.

The protein resides in the cytoplasm. It catalyses the reaction tRNA(His) + L-histidine + ATP = L-histidyl-tRNA(His) + AMP + diphosphate + H(+). The polypeptide is Histidine--tRNA ligase (Escherichia coli O139:H28 (strain E24377A / ETEC)).